The chain runs to 264 residues: Formamidopyrimidine-DNA glycosylase (264 aa).

Catalysis depends on proline 2, which acts as the Schiff-base intermediate with DNA. The active-site Proton donor is glutamate 3. The active-site Proton donor; for beta-elimination activity is the lysine 58. The DNA site is built by histidine 89, arginine 107, and arginine 144. The FPG-type zinc finger occupies 229–263; sequence RVYQRTGEPCLNCKTPIRRVIVTQRSSHFCPHCQK. Residue arginine 253 is the Proton donor; for delta-elimination activity of the active site.

This sequence belongs to the FPG family. As to quaternary structure, monomer. Requires Zn(2+) as cofactor.

The catalysed reaction is Hydrolysis of DNA containing ring-opened 7-methylguanine residues, releasing 2,6-diamino-4-hydroxy-5-(N-methyl)formamidopyrimidine.. It carries out the reaction 2'-deoxyribonucleotide-(2'-deoxyribose 5'-phosphate)-2'-deoxyribonucleotide-DNA = a 3'-end 2'-deoxyribonucleotide-(2,3-dehydro-2,3-deoxyribose 5'-phosphate)-DNA + a 5'-end 5'-phospho-2'-deoxyribonucleoside-DNA + H(+). Functionally, involved in base excision repair of DNA damaged by oxidation or by mutagenic agents. Acts as a DNA glycosylase that recognizes and removes damaged bases. Has a preference for oxidized purines, such as 7,8-dihydro-8-oxoguanine (8-oxoG). Has AP (apurinic/apyrimidinic) lyase activity and introduces nicks in the DNA strand. Cleaves the DNA backbone by beta-delta elimination to generate a single-strand break at the site of the removed base with both 3'- and 5'-phosphates. The protein is Formamidopyrimidine-DNA glycosylase of Solibacter usitatus (strain Ellin6076).